We begin with the raw amino-acid sequence, 822 residues long: Outer dense fiber protein 2 (822 aa).

Residues 26–45 (KGQKTTPAKCQQKHKQKMKG) are disordered. Coiled-coil stretches lie at residues 113 to 418 (CKMN…EECA), 452 to 490 (DKSD…ALMD), and 516 to 796 (MEEK…NYVQ).

Belongs to the ODF2 family. As to quaternary structure, self-associates. Associates with microtubules and forms a fibrillar structure partially linked to the microtubule network.

The protein localises to the cytoplasm. It localises to the cytoskeleton. It is found in the microtubule organizing center. The protein resides in the centrosome. Its subcellular location is the cell projection. The protein localises to the cilium. It localises to the centriole. It is found in the spindle pole. The protein resides in the flagellum. Its function is as follows. Seems to be a major component of sperm tail outer dense fibers (ODF). ODFs are filamentous structures located on the outside of the axoneme in the midpiece and principal piece of the mammalian sperm tail and may help to maintain the passive elastic structures and elastic recoil of the sperm tail. The chain is Outer dense fiber protein 2 (ODF2) from Gallus gallus (Chicken).